Here is a 460-residue protein sequence, read N- to C-terminus: ATP synthase subunit beta (460 aa).

150–157 lines the ATP pocket; the sequence is GGAGVGKT.

It belongs to the ATPase alpha/beta chains family. F-type ATPases have 2 components, CF(1) - the catalytic core - and CF(0) - the membrane proton channel. CF(1) has five subunits: alpha(3), beta(3), gamma(1), delta(1), epsilon(1). CF(0) has three main subunits: a(1), b(2) and c(9-12). The alpha and beta chains form an alternating ring which encloses part of the gamma chain. CF(1) is attached to CF(0) by a central stalk formed by the gamma and epsilon chains, while a peripheral stalk is formed by the delta and b chains.

The protein resides in the cell inner membrane. It carries out the reaction ATP + H2O + 4 H(+)(in) = ADP + phosphate + 5 H(+)(out). Produces ATP from ADP in the presence of a proton gradient across the membrane. The catalytic sites are hosted primarily by the beta subunits. The polypeptide is ATP synthase subunit beta (Escherichia coli (strain SMS-3-5 / SECEC)).